The chain runs to 349 residues: DNA polymerase IV (349 aa).

The UmuC domain maps to 7–188 (IIHIDMDYFF…LPVKKLFGVG (182 aa)). Positions 11 and 106 each coordinate Mg(2+). The active site involves Glu107.

It belongs to the DNA polymerase type-Y family. Monomer. Requires Mg(2+) as cofactor.

It localises to the cytoplasm. The enzyme catalyses DNA(n) + a 2'-deoxyribonucleoside 5'-triphosphate = DNA(n+1) + diphosphate. Its function is as follows. Poorly processive, error-prone DNA polymerase involved in untargeted mutagenesis. Copies undamaged DNA at stalled replication forks, which arise in vivo from mismatched or misaligned primer ends. These misaligned primers can be extended by PolIV. Exhibits no 3'-5' exonuclease (proofreading) activity. May be involved in translesional synthesis, in conjunction with the beta clamp from PolIII. In Francisella tularensis subsp. holarctica (strain OSU18), this protein is DNA polymerase IV.